We begin with the raw amino-acid sequence, 636 residues long: Putative lipase ATG15 (636 aa).

At 1-19 the chain is on the cytoplasmic side; the sequence is MYKYGTVVDPAMTTNRRSR. Residues 20–42 form a helical; Signal-anchor for type II membrane protein membrane-spanning segment; the sequence is LSGFRCASTARVTATLLLSFLAF. Over 43–636 the chain is Lumenal; it reads SPSSASSDFG…DDLEFATDEM (594 aa). N-linked (GlcNAc...) asparagine glycosylation is found at N211, N233, N291, N315, and N477. Residues 478-500 are disordered; sequence GTETTTTSSPSTTSTTRTRTRTS. The segment covering 479 to 500 has biased composition (low complexity); it reads TETTTTSSPSTTSTTRTRTRTS.

It belongs to the AB hydrolase superfamily. Lipase family. Binds to both phosphatidylinositol (PI) and phosphatidylinositol 3,5-bisphosphate (PIP2).

It localises to the endosome. It is found in the multivesicular body membrane. The protein resides in the prevacuolar compartment membrane. The enzyme catalyses a triacylglycerol + H2O = a diacylglycerol + a fatty acid + H(+). In terms of biological role, lipase which is essential for lysis of subvacuolar cytoplasm to vacuole targeted bodies and intravacuolar autophagic bodies. Involved in the lysis of intravacuolar multivesicular body (MVB) vesicles. The intravacuolar membrane disintegration by ATG15 is critical to life span extension. Autophagy is required for proper vegetative growth, asexual/sexual reproduction, and full virulence. Autophagy is particularly involved in the biosynthesis of deoxynivalenol (DON), an important virulence determinant. This Gibberella zeae (strain ATCC MYA-4620 / CBS 123657 / FGSC 9075 / NRRL 31084 / PH-1) (Wheat head blight fungus) protein is Putative lipase ATG15.